The sequence spans 290 residues: 4-hydroxy-tetrahydrodipicolinate synthase (290 aa).

Pyruvate is bound at residue Thr-44. The Proton donor/acceptor role is filled by Tyr-132. The Schiff-base intermediate with substrate role is filled by Lys-160. Ile-202 is a binding site for pyruvate.

The protein belongs to the DapA family. As to quaternary structure, homotetramer; dimer of dimers.

The protein localises to the cytoplasm. It carries out the reaction L-aspartate 4-semialdehyde + pyruvate = (2S,4S)-4-hydroxy-2,3,4,5-tetrahydrodipicolinate + H2O + H(+). It functions in the pathway amino-acid biosynthesis; L-lysine biosynthesis via DAP pathway; (S)-tetrahydrodipicolinate from L-aspartate: step 3/4. Functionally, catalyzes the condensation of (S)-aspartate-beta-semialdehyde [(S)-ASA] and pyruvate to 4-hydroxy-tetrahydrodipicolinate (HTPA). The polypeptide is 4-hydroxy-tetrahydrodipicolinate synthase (Geobacter sp. (strain M21)).